Consider the following 471-residue polypeptide: Putative multidrug resistance protein MdtD (471 aa).

Transmembrane regions (helical) follow at residues 12–32, 49–69, 77–97, 106–126, 138–158, 165–185, 197–217, 225–245, 263–285, 290–312, 342–362, 396–416, and 431–451; these read LWIV…VNTA, MVIV…GWLA, IFFT…QSST, VLQG…VMKI, FVTL…GLLV, WIFL…LWLM, FSGF…LDGY, AGLG…LWHA, FSLG…FMTP, IGLG…GSMG, LLFM…VMLF, MVMQ…LGAF, and IFFW…LVFA.

This sequence belongs to the major facilitator superfamily. TCR/Tet family.

Its subcellular location is the cell inner membrane. The protein is Putative multidrug resistance protein MdtD of Cronobacter sakazakii (strain ATCC BAA-894) (Enterobacter sakazakii).